An 81-amino-acid chain; its full sequence is Elicitor peptide 4 (81 aa).

Residues 1–54 (MERGVSYYLWIPFKFIHQTFGSLLLKLLGLRSPSDHSFPEDGEEEVKVVEVSSR) constitute a propeptide that is removed on maturation. A disordered region spans residues 57–81 (PGKKNVLKKSRESSGKPGGTNKKPF).

Belongs to the brassicaceae elicitor peptide family.

Elicitor of plant defense. The polypeptide is Elicitor peptide 4 (PEP4) (Arabidopsis thaliana (Mouse-ear cress)).